Reading from the N-terminus, the 259-residue chain is 5'-nucleotidase SurE (259 aa).

A divalent metal cation is bound by residues Asp8, Asp9, Ser39, and Asn98.

Belongs to the SurE nucleotidase family. The cofactor is a divalent metal cation.

Its subcellular location is the cytoplasm. The catalysed reaction is a ribonucleoside 5'-phosphate + H2O = a ribonucleoside + phosphate. Nucleotidase that shows phosphatase activity on nucleoside 5'-monophosphates. This Fervidobacterium nodosum (strain ATCC 35602 / DSM 5306 / Rt17-B1) protein is 5'-nucleotidase SurE.